The following is a 282-amino-acid chain: Formamidopyrimidine-DNA glycosylase (282 aa).

P2 acts as the Schiff-base intermediate with DNA in catalysis. The active-site Proton donor is E3. The active-site Proton donor; for beta-elimination activity is K60. DNA is bound by residues H99, R118, and R163. The segment at 248-282 (WVYGRTGEPCRVCGTSIERLKLGGRSAHFCPRCQA) adopts an FPG-type zinc-finger fold. The Proton donor; for delta-elimination activity role is filled by R272.

Belongs to the FPG family. As to quaternary structure, monomer. Requires Zn(2+) as cofactor.

It catalyses the reaction Hydrolysis of DNA containing ring-opened 7-methylguanine residues, releasing 2,6-diamino-4-hydroxy-5-(N-methyl)formamidopyrimidine.. The catalysed reaction is 2'-deoxyribonucleotide-(2'-deoxyribose 5'-phosphate)-2'-deoxyribonucleotide-DNA = a 3'-end 2'-deoxyribonucleotide-(2,3-dehydro-2,3-deoxyribose 5'-phosphate)-DNA + a 5'-end 5'-phospho-2'-deoxyribonucleoside-DNA + H(+). Its function is as follows. Involved in base excision repair of DNA damaged by oxidation or by mutagenic agents. Acts as a DNA glycosylase that recognizes and removes damaged bases. Has a preference for oxidized purines, such as 7,8-dihydro-8-oxoguanine (8-oxoG). Has AP (apurinic/apyrimidinic) lyase activity and introduces nicks in the DNA strand. Cleaves the DNA backbone by beta-delta elimination to generate a single-strand break at the site of the removed base with both 3'- and 5'-phosphates. This chain is Formamidopyrimidine-DNA glycosylase, found in Rippkaea orientalis (strain PCC 8801 / RF-1) (Cyanothece sp. (strain PCC 8801)).